Here is a 361-residue protein sequence, read N- to C-terminus: sn-glycerol-3-phosphate import ATP-binding protein UgpC (361 aa).

The region spanning 4–235 (VTLRNVRKTY…PATTFVASFI (232 aa)) is the ABC transporter domain. 37–44 (GPSGCGKS) is an ATP binding site.

This sequence belongs to the ABC transporter superfamily. sn-glycerol-3-phosphate importer (TC 3.A.1.1.3) family. The complex is composed of two ATP-binding proteins (UgpC), two transmembrane proteins (UgpA and UgpE) and a solute-binding protein (UgpB).

It is found in the cell inner membrane. It carries out the reaction sn-glycerol 3-phosphate(out) + ATP + H2O = sn-glycerol 3-phosphate(in) + ADP + phosphate + H(+). In terms of biological role, part of the ABC transporter complex UgpBAEC involved in sn-glycerol-3-phosphate (G3P) import. Responsible for energy coupling to the transport system. The sequence is that of sn-glycerol-3-phosphate import ATP-binding protein UgpC from Rhodopseudomonas palustris (strain BisA53).